The sequence spans 528 residues: Phosphoenolpyruvate carboxykinase (ATP) (528 aa).

Residues Arg56, Tyr192, and Lys198 each coordinate substrate. Residues Lys198, His217, and 233–241 (GLSGTGKTT) each bind ATP. Mn(2+)-binding residues include Lys198 and His217. Asp254 lines the Mn(2+) pocket. Residues Glu282, Arg319, and Thr444 each coordinate ATP. Arg319 provides a ligand contact to substrate.

It belongs to the phosphoenolpyruvate carboxykinase (ATP) family. Mn(2+) serves as cofactor.

It localises to the cytoplasm. The catalysed reaction is oxaloacetate + ATP = phosphoenolpyruvate + ADP + CO2. Its pathway is carbohydrate biosynthesis; gluconeogenesis. In terms of biological role, involved in the gluconeogenesis. Catalyzes the conversion of oxaloacetate (OAA) to phosphoenolpyruvate (PEP) through direct phosphoryl transfer between the nucleoside triphosphate and OAA. This chain is Phosphoenolpyruvate carboxykinase (ATP), found in Bacillus cytotoxicus (strain DSM 22905 / CIP 110041 / 391-98 / NVH 391-98).